The sequence spans 326 residues: Zinc-dependent endopolyphosphatase (326 aa).

Residues 1–9 lie on the Cytoplasmic side of the membrane; that stretch reads MEDKRKRRA. A helical transmembrane segment spans residues 10–30; that stretch reads ATLSTALILFVACCVYTLYIF. The Vacuolar portion of the chain corresponds to 31–326; that stretch reads KFDNPRLSPP…DYELIQVQCS (296 aa). N-linked (GlcNAc...) asparagine glycans are attached at residues N90 and N241.

This sequence belongs to the metallophosphoesterase superfamily. As to quaternary structure, interacts with PPN1. It depends on Zn(2+) as a cofactor. The cofactor is Co(2+). Mg(2+) serves as cofactor.

It is found in the vacuole membrane. The catalysed reaction is [phosphate](n+1) + n H2O = (n+1) phosphate + n H(+). With respect to regulation, not sensitive to heparin inhibition. Its function is as follows. Catalyzes the hydrolysis of inorganic polyphosphate (polyP) chains of many hundreds of phosphate residues into shorter lengths. Exclusively shows endopolyphosphatase activity, cleaving inside the polyP chain. Together with PPN1, responsible for a substantial fraction of polyphosphatase activity that is necessary to mobilize polyP stores in response to phosphate scarcity. In Saccharomyces cerevisiae (strain ATCC 204508 / S288c) (Baker's yeast), this protein is Zinc-dependent endopolyphosphatase.